The following is a 276-amino-acid chain: Arginine and glutamate-rich protein 1 (276 aa).

2 stretches are compositionally biased toward basic residues: residues 1–30 (MGRSRSRSSSRSKHTKSSKHNKKNRSRSRS) and 38–59 (ARKRSKSRESKRNRRRESRSRS). The necessary and sufficient for RNA binding stretch occupies residues 1–77 (MGRSRSRSSS…RRDRERERER (77 aa)). A disordered region spans residues 1-117 (MGRSRSRSSS…EKKAEFERQR (117 aa)). Composition is skewed to basic and acidic residues over residues 67–87 (SRRDRERERERASSPPDRIDI) and 96–117 (SSLDEKQKREEEEKKAEFERQR). The necessary and sufficient for transcriptional regulation stretch occupies residues 78-276 (ASSPPDRIDI…KLSFSLKSQD (199 aa)). The short motif at 175–179 (LLEEL) is the LXXLL motif 1; degenerate element. An LXXLL motif 2; degenerate motif is present at residues 204 to 208 (LERIL). The segment covering 240 to 256 (RMKLEQERQRQQKEEQK) has biased composition (basic and acidic residues). Positions 240 to 276 (RMKLEQERQRQQKEEQKIILGKGKSRPKLSFSLKSQD) are disordered.

The protein belongs to the ARGLU1 family.

It localises to the nucleus. Its subcellular location is the nucleus speckle. The protein resides in the chromosome. Functionally, dual function regulator of gene expression; regulator of transcription and modulator of alternative splicing. General coactivator of nuclear receptor-induced gene expression. The sequence is that of Arginine and glutamate-rich protein 1 (ARGLU1) from Gallus gallus (Chicken).